The following is a 457-amino-acid chain: Endo-1,3(4)-beta-glucanase ARB_04519 (457 aa).

A signal peptide spans 1–18 (MRTTGLLLLGALAELGSA). The GH16 domain occupies 19–319 (TYILEDDYQP…YMKVYQQGTA (301 aa)). Residue Glu130 is the Nucleophile of the active site. Glu135 functions as the Proton donor in the catalytic mechanism. Asn200 carries N-linked (GlcNAc...) asparagine glycosylation. The interval 318–397 (TAPTKPSQAP…DSCPPPTQPA (80 aa)) is disordered. Positions 333-352 (TPALPTMKSTSTVSSMVSAT) are enriched in low complexity. Residues 353–362 (QPAPTASNPT) are compositionally biased toward polar residues. Positions 368–378 (PSSSSSNNGPQ) are enriched in low complexity.

This sequence belongs to the glycosyl hydrolase 16 family.

It is found in the secreted. The catalysed reaction is Endohydrolysis of (1-&gt;3)- or (1-&gt;4)-linkages in beta-D-glucans when the glucose residue whose reducing group is involved in the linkage to be hydrolyzed is itself substituted at C-3.. In terms of biological role, mixed-linked glucanase involved in the degradation of complex natural cellulosic substrates. Active on laminarin. lichenan, soluble carboxymethyl cellulose but not on pustulan. The polypeptide is Endo-1,3(4)-beta-glucanase ARB_04519 (Arthroderma benhamiae (strain ATCC MYA-4681 / CBS 112371) (Trichophyton mentagrophytes)).